Reading from the N-terminus, the 173-residue chain is MTTIVCVRKNGKVAIGGDGQATLGNCVEKGTVRKVRRLYKDKVVTGFAGSTADAFILRDLFEKKLELHQGHLVKAAVELAKEWRTERSLRRLEAMMIVANESEFLLVSGSGDVIEPEFDVLAIGSGGNFAKSAALALLRTNNELSAAEIVKQALIIAGDIDIYTNHNHVIEEV.

Residue threonine 2 is part of the active site. Na(+) contacts are provided by glycine 158, aspartate 161, and threonine 164.

Belongs to the peptidase T1B family. HslV subfamily. A double ring-shaped homohexamer of HslV is capped on each side by a ring-shaped HslU homohexamer. The assembly of the HslU/HslV complex is dependent on binding of ATP.

Its subcellular location is the cytoplasm. The enzyme catalyses ATP-dependent cleavage of peptide bonds with broad specificity.. Its activity is regulated as follows. Allosterically activated by HslU binding. Functionally, protease subunit of a proteasome-like degradation complex believed to be a general protein degrading machinery. In Mannheimia succiniciproducens (strain KCTC 0769BP / MBEL55E), this protein is ATP-dependent protease subunit HslV.